The following is a 218-amino-acid chain: MGQKINPLGFRLGATQGHHSLWFAHPKKYSEGLQEDQKIRDCIQNYVQKNMRIFSGVEGIARIEIQKRIDLIQVIIFMGFPKLVIDDGSRKIEELQINVQKEFNSGNRKLNIAITRIGNPYGHPNILAEFIAGQLKNRVSFRKAMKKAIELTEQAGTKGIQVQIAGRIDGKEIARVEWIREGRVPLQTIRAKIDYCCYPVRTIYGILGIKIWIFVDEQ.

The KH type-2 domain occupies 47 to 118; sequence VQKNMRIFSG…KLNIAITRIG (72 aa).

This sequence belongs to the universal ribosomal protein uS3 family. In terms of assembly, part of the 30S ribosomal subunit.

The protein localises to the plastid. It is found in the chloroplast. The chain is Small ribosomal subunit protein uS3c (rps3) from Cucumis sativus (Cucumber).